Consider the following 94-residue polypeptide: Integration host factor subunit beta (94 aa).

It belongs to the bacterial histone-like protein family. In terms of assembly, heterodimer of an alpha and a beta chain.

Functionally, this protein is one of the two subunits of integration host factor, a specific DNA-binding protein that functions in genetic recombination as well as in transcriptional and translational control. The sequence is that of Integration host factor subunit beta from Haemophilus influenzae (strain 86-028NP).